A 117-amino-acid polypeptide reads, in one-letter code: Peptidyl-tRNA hydrolase (117 aa).

It belongs to the PTH2 family.

It is found in the cytoplasm. It carries out the reaction an N-acyl-L-alpha-aminoacyl-tRNA + H2O = an N-acyl-L-amino acid + a tRNA + H(+). Functionally, the natural substrate for this enzyme may be peptidyl-tRNAs which drop off the ribosome during protein synthesis. In Metallosphaera sedula (strain ATCC 51363 / DSM 5348 / JCM 9185 / NBRC 15509 / TH2), this protein is Peptidyl-tRNA hydrolase.